We begin with the raw amino-acid sequence, 492 residues long: Glutamyl-tRNA(Gln) amidotransferase subunit A (492 aa).

Residues K78 and S158 each act as charge relay system in the active site. S182 acts as the Acyl-ester intermediate in catalysis.

The protein belongs to the amidase family. GatA subfamily. As to quaternary structure, heterotrimer of A, B and C subunits.

It carries out the reaction L-glutamyl-tRNA(Gln) + L-glutamine + ATP + H2O = L-glutaminyl-tRNA(Gln) + L-glutamate + ADP + phosphate + H(+). Functionally, allows the formation of correctly charged Gln-tRNA(Gln) through the transamidation of misacylated Glu-tRNA(Gln) in organisms which lack glutaminyl-tRNA synthetase. The reaction takes place in the presence of glutamine and ATP through an activated gamma-phospho-Glu-tRNA(Gln). This is Glutamyl-tRNA(Gln) amidotransferase subunit A from Orientia tsutsugamushi (strain Boryong) (Rickettsia tsutsugamushi).